Consider the following 587-residue polypeptide: Calcium/calmodulin-dependent protein kinase kinase 2 (587 aa).

The segment covering 1-11 (MSSCVSSQPTS) has biased composition (polar residues). Disordered stretches follow at residues 1 to 32 (MSSC…SQKP) and 74 to 115 (EADG…SSLD). Ser-2 carries the post-translational modification N-acetylserine. A phosphoserine mark is found at Ser-99, Ser-113, Ser-128, Ser-132, and Ser-136. The span at 101–115 (QERSQGGPASSSSLD) shows a compositional bias: polar residues. The region spanning 164-445 (YTLKDEIGKG…VPEIKLHPWV (282 aa)) is the Protein kinase domain. ATP-binding positions include 170-178 (IGKGSYGVV) and Lys-193. Positions 203 to 225 (QAGFPRRPPPRGTRPAPGGCIQP) are RP domain. Residues 204 to 224 (AGFPRRPPPRGTRPAPGGCIQ) form a disordered region. The Proton acceptor role is filled by Asp-311. The tract at residues 471–476 (ENSVKH) is autoinhibitory domain. The interval 474-499 (VKHIPSLATVILVKTMIRKRSFGNPF) is calmodulin-binding. A phosphoserine mark is found at Ser-494 and Ser-510. Residues 496-587 (GNPFEGSRRE…QQPEEAMEPE (92 aa)) are disordered. A compositionally biased stretch (basic and acidic residues) spans 520–535 (PTREWEPLSEPKEARQ). Residues 569 to 579 (PGSPPRTPPQQ) are compositionally biased toward pro residues. Ser-571 is subject to Phosphoserine.

Belongs to the protein kinase superfamily. Ser/Thr protein kinase family. As to quaternary structure, interacts with calmodulin. In terms of processing, phosphorylated by PKA. Each isoform may show a different pattern of phosphorylation. Autophosphorylated. Mainly expressed in brain, but detected in all tissues tested (at protein level). In the brain, isoform 1 may be predominant. with high levels in the cerebellum and hippocampus, although isoform 3 is detectable. Isoform 3 is also expressed in lung.

The protein localises to the nucleus. The protein resides in the cytoplasm. Its subcellular location is the cell projection. It localises to the neuron projection. The catalysed reaction is L-seryl-[protein] + ATP = O-phospho-L-seryl-[protein] + ADP + H(+). The enzyme catalyses L-threonyl-[protein] + ATP = O-phospho-L-threonyl-[protein] + ADP + H(+). Its activity is regulated as follows. Activated by Ca(2+)/calmodulin. Binding of calmodulin may relieve intrasteric autoinhibition. Autophosphorylation does not alter activity or regulation by Ca(2+)/calmodulin. In part, activity is independent on Ca(2+)/calmodulin. In terms of biological role, calcium/calmodulin-dependent protein kinase belonging to a proposed calcium-triggered signaling cascade involved in a number of cellular processes. Phosphorylates CAMK1 and CAMK4. Phosphorylates CAMK1D. Seems to be involved in hippocampal activation of CREB1. Efficiently phosphorylates 5'-AMP-activated protein kinase (AMPK) trimer, including that consisting of PRKAA1, PRKAB1 and PRKAG1. This phosphorylation is stimulated in response to Ca(2+) signals. May play a role in neurite growth. Isoform 2 may promote neurite elongation, while isoform 1 may promoter neurite branching. This is Calcium/calmodulin-dependent protein kinase kinase 2 (Camkk2) from Rattus norvegicus (Rat).